Reading from the N-terminus, the 446-residue chain is Na(+)/H(+) antiporter NhaA (446 aa).

11 consecutive transmembrane segments (helical) span residues 23–43 (GGMLLMGVVLLAMFLANSPWG), 73–93 (LMTFINDALMAVFFFSVGLEI), 109–129 (LLPIVAACGGMLVPVLIYYFM), 138–158 (GLAIPMATDIAFSLGVLSLFG), 167–187 (VFLTAFAVVDDIGGILVIALF), 193–213 (SVNYLIASAGILLILCGGNFF), 219–239 (WFYIFWGVIMWYLFLQSGIHA), 314–334 (MVNYIILPLFAFANAGVSLTA), 348–368 (VLAGLLAGKFAGIYFFTWLVI), 381–401 (WVNLTGICLLGGIGFTVSLFI), and 419–439 (GVILGTVLAGVLAYLVLQFAL).

This sequence belongs to the NhaA Na(+)/H(+) (TC 2.A.33) antiporter family.

The protein resides in the cell inner membrane. The enzyme catalyses Na(+)(in) + 2 H(+)(out) = Na(+)(out) + 2 H(+)(in). Its function is as follows. Na(+)/H(+) antiporter that extrudes sodium in exchange for external protons. The protein is Na(+)/H(+) antiporter NhaA of Phocaeicola vulgatus (strain ATCC 8482 / DSM 1447 / JCM 5826 / CCUG 4940 / NBRC 14291 / NCTC 11154) (Bacteroides vulgatus).